The sequence spans 291 residues: Insulin-like growth factor-binding protein 3 (291 aa).

The signal sequence occupies residues 1 to 27 (MQRARPTLWAAALTLLVLLRGPPVARA). Residues 28-134 (GASSAGLGPV…AYLLPAPPAP (107 aa)) are IGF-binding. The 82-residue stretch at 36–117 (PVVRCEPCDA…LDGRGLCVNA (82 aa)) folds into the IGFBP N-terminal domain. 6 disulfides stabilise this stretch: cysteine 40-cysteine 67, cysteine 43-cysteine 69, cysteine 51-cysteine 70, cysteine 58-cysteine 73, cysteine 81-cysteine 94, and cysteine 88-cysteine 114. 2 N-linked (GlcNAc...) (complex) asparagine glycosylation sites follow: asparagine 116 and asparagine 136. 2 disordered regions span residues 130-162 (APPA…RVSD) and 189-211 (DYES…TEYG). A compositionally biased stretch (low complexity) spans 146–156 (AGSVESPSVSS). Serine 148 is modified (phosphoserine; by FAM20C). Residues 191-202 (ESQSTDTQNFSS) show a composition bias toward polar residues. Phosphoserine; by CK2 is present on serine 194. The N-linked (GlcNAc...) (complex) asparagine glycan is linked to asparagine 199. Serine 201 bears the Phosphoserine; by FAM20C mark. Serine 202 is subject to Phosphoserine; by CK2. A Thyroglobulin type-1 domain is found at 210 to 285 (YGPCRREMED…TTKGKEDVHC (76 aa)). Intrachain disulfides connect cysteine 213/cysteine 240, cysteine 251/cysteine 262, and cysteine 264/cysteine 285.

In terms of assembly, interacts with XLKD1. Binds IGF2 more than IGF1. Forms a ternary complex of about 140 to 150 kDa with IGF1 or IGF2 and a 85 kDa glycoprotein (ALS). Interacts with humanin; humanin competes with importin KPNB1 for binding to IGFBP3, blocking IGFBP3 nuclear import and IGFBP3-mediated apoptosis. Interacts with TMEM219. Interacts with RXRA; this interaction modulates the transcriptional activity of RXRA. Interacts with LRP1; this interaction mediates cell growth inhibition independent of IGF1. Phosphorylated by FAM20C in the extracellular medium. Phosphorylated by CK2; resulting in decreased nuclear localization. As to expression, expressed by most tissues. Present in plasma.

The protein resides in the secreted. It is found in the nucleus. Its function is as follows. Multifunctional protein that plays a critical role in regulating the availability of IGFs such as IGF1 and IGF2 to their receptors and thereby regulates IGF-mediated cellular processes including proliferation, differentiation, and apoptosis in a cell-type specific manner. Also exhibits IGF-independent antiproliferative and apoptotic effects mediated by its receptor TMEM219/IGFBP-3R. Inhibits the positive effect of humanin on insulin sensitivity. Promotes testicular germ cell apoptosis. Acts via LRP-1/alpha2M receptor, also known as TGF-beta type V receptor, to mediate cell growth inhibition independent of IGF1. Mechanistically, induces serine-specific dephosphorylation of IRS1 or IRS2 upon ligation to its receptor, leading to the inhibitory cascade. In the nucleus, interacts with transcription factors such as retinoid X receptor-alpha/RXRA to regulate transcriptional signaling and apoptosis. The polypeptide is Insulin-like growth factor-binding protein 3 (IGFBP3) (Homo sapiens (Human)).